The following is a 107-amino-acid chain: Large ribosomal subunit protein uL23 (107 aa).

This sequence belongs to the universal ribosomal protein uL23 family. In terms of assembly, part of the 50S ribosomal subunit. Contacts protein L29, and trigger factor when it is bound to the ribosome.

One of the early assembly proteins it binds 23S rRNA. One of the proteins that surrounds the polypeptide exit tunnel on the outside of the ribosome. Forms the main docking site for trigger factor binding to the ribosome. The protein is Large ribosomal subunit protein uL23 of Rhodopirellula baltica (strain DSM 10527 / NCIMB 13988 / SH1).